The sequence spans 423 residues: MAAAVAASSSSSSSSCAAVGVATASHPHRHRQARFVVSPPAPASPAALLWRRPRRVAPTTFCSAPSLGRVGWPRREGAAWLLSFRAGPVSSPSSAAAGDPSQALSALLPLVVAATAVAALGNPATFSWVSKEYYAPALGGIMLSIGIKLSIDDFALAFKRPVPLTIGYMAQYIVKPLMGVLIARAFGMPSAFFAGFVLTCCVSGAQLSSYASFLSKGDVALSILLTSCSTISSVVVTPVLTGLLIGSVVPVDGIAMAKSILQVVLVPVTLGLLLNTYAKAVVNVIQPVMPFVAMLCTSLCIGSPLAINRSKILSSEGFLLLLPIVTFHIAAFIVGYWISKLPMLRQEEPVCRTISVCTGMQSSTLAGLLATQFLGSSQAVPAACSVVIMAIFGLTLASYWGNGLRIRDIGSRFVPQASAGVSS.

The N-terminal 45 residues, 1–45, are a transit peptide targeting the chloroplast; that stretch reads MAAAVAASSSSSSSSCAAVGVATASHPHRHRQARFVVSPPAPASP. 9 consecutive transmembrane segments (helical) span residues 106-126, 138-158, 165-187, 192-214, 231-251, 254-274, 287-307, 318-338, and 380-400; these read ALLP…PATF, LGGI…ALAF, TIGY…RAFG, FFAG…ASFL, ISSV…VVPV, IAMA…GLLL, PVMP…PLAI, FLLL…GYWI, and VPAA…ASYW.

It belongs to the bile acid:sodium symporter (BASS) (TC 2.A.28) family.

The protein resides in the membrane. It is found in the plastid. It localises to the chloroplast envelope. Its function is as follows. May function as sodium-coupled metabolite transporter across the chloroplast envelope. This is Probable sodium/metabolite cotransporter BASS3, chloroplastic (BASS3) from Oryza sativa subsp. japonica (Rice).